The sequence spans 186 residues: Ribosome-recycling factor (186 aa).

The protein belongs to the RRF family.

Its subcellular location is the cytoplasm. Responsible for the release of ribosomes from messenger RNA at the termination of protein biosynthesis. May increase the efficiency of translation by recycling ribosomes from one round of translation to another. This chain is Ribosome-recycling factor, found in Rickettsia conorii (strain ATCC VR-613 / Malish 7).